Reading from the N-terminus, the 468-residue chain is Immunoglobulin superfamily member 21 (468 aa).

The first 24 residues, 1-24, serve as a signal peptide directing secretion; that stretch reads MQAAPSLRRASCLLLAAILDLARG. Residues 25-132 form the Ig-like 1 domain; sequence YLTVNIEPLP…RATREKVVLA (108 aa). Cysteine 46 and cysteine 116 are joined by a disulfide. N-linked (GlcNAc...) asparagine glycosylation is found at asparagine 82, asparagine 165, and asparagine 407. Residues 344–429 enclose the Ig-like 2 domain; sequence PKIMMTPSRA…GSTDTHTRLI (86 aa).

In terms of assembly, interacts (Ig-like 1 domain) with NRXN2 (via Laminin G-like 1 domain) in a trans-interaction manner. In terms of tissue distribution, expressed in brain (at protein levels). Highly expressed in the pyramidal cell layer of the dorsal and ventral hippocampal CA1 and CA3 regions, layers 5 and 6 of the cortex, the thalamus and the pons and weakly expressed in the cerebellum. Expressed in neurons but not in glia.

It localises to the postsynaptic cell membrane. In terms of biological role, involved in synaptic inhibition in the brain. Selectively regulates inhibitory presynaptic differentiation through interacting with presynaptic NRXN2. This chain is Immunoglobulin superfamily member 21 (Igsf21), found in Mus musculus (Mouse).